The sequence spans 419 residues: Tyrosine--tRNA ligase 2 (419 aa).

Tyr-34 contacts L-tyrosine. A 'HIGH' region motif is present at residues Pro-39–His-48. L-tyrosine contacts are provided by Tyr-168 and Gln-172. The short motif at Lys-230 to Ser-234 is the 'KMSKS' region element. Lys-233 is an ATP binding site. One can recognise an S4 RNA-binding domain in the interval Lys-352 to Leu-418.

Belongs to the class-I aminoacyl-tRNA synthetase family. TyrS type 1 subfamily. Homodimer.

It is found in the cytoplasm. The enzyme catalyses tRNA(Tyr) + L-tyrosine + ATP = L-tyrosyl-tRNA(Tyr) + AMP + diphosphate + H(+). Catalyzes the attachment of tyrosine to tRNA(Tyr) in a two-step reaction: tyrosine is first activated by ATP to form Tyr-AMP and then transferred to the acceptor end of tRNA(Tyr). In Bacillus cereus (strain ATCC 10987 / NRS 248), this protein is Tyrosine--tRNA ligase 2.